The primary structure comprises 122 residues: Large ribosomal subunit protein uL14 (122 aa).

It belongs to the universal ribosomal protein uL14 family. Part of the 50S ribosomal subunit. Forms a cluster with proteins L3 and L19. In the 70S ribosome, L14 and L19 interact and together make contacts with the 16S rRNA in bridges B5 and B8.

Functionally, binds to 23S rRNA. Forms part of two intersubunit bridges in the 70S ribosome. This Thermodesulfovibrio yellowstonii (strain ATCC 51303 / DSM 11347 / YP87) protein is Large ribosomal subunit protein uL14.